The following is a 75-amino-acid chain: Protein TM_1420 (75 aa).

[2Fe-2S] cluster is bound by residues Cys6, Cys11, Cys39, and Cys43.

[2Fe-2S] cluster is required as a cofactor.

Might be part of a multi-protein complex, possibly involved in metal cluster assembly. In Thermotoga maritima (strain ATCC 43589 / DSM 3109 / JCM 10099 / NBRC 100826 / MSB8), this protein is Protein TM_1420.